The primary structure comprises 863 residues: Bifunctional uridylyltransferase/uridylyl-removing enzyme (863 aa).

Residues 1–328 (MLFSPTLSSL…SSNQDTVIDQ (328 aa)) are uridylyltransferase. Residues 329 to 687 (LDDDFQLINQ…ISNRFSLGGT (359 aa)) form a uridylyl-removing region. The 123-residue stretch at 446–568 (VDEHTLRVML…MQNQVRLDYL (123 aa)) folds into the HD domain. 2 consecutive ACT domains span residues 688–764 (EVFI…KLPA) and 794–863 (EMEL…QQIR).

It belongs to the GlnD family. The cofactor is Mg(2+).

It carries out the reaction [protein-PII]-L-tyrosine + UTP = [protein-PII]-uridylyl-L-tyrosine + diphosphate. The enzyme catalyses [protein-PII]-uridylyl-L-tyrosine + H2O = [protein-PII]-L-tyrosine + UMP + H(+). Uridylyltransferase (UTase) activity is inhibited by glutamine, while glutamine activates uridylyl-removing (UR) activity. Its function is as follows. Modifies, by uridylylation and deuridylylation, the PII regulatory proteins (GlnB and homologs), in response to the nitrogen status of the cell that GlnD senses through the glutamine level. Under low glutamine levels, catalyzes the conversion of the PII proteins and UTP to PII-UMP and PPi, while under higher glutamine levels, GlnD hydrolyzes PII-UMP to PII and UMP (deuridylylation). Thus, controls uridylylation state and activity of the PII proteins, and plays an important role in the regulation of nitrogen assimilation and metabolism. This chain is Bifunctional uridylyltransferase/uridylyl-removing enzyme, found in Haemophilus influenzae (strain ATCC 51907 / DSM 11121 / KW20 / Rd).